Consider the following 437-residue polypeptide: Enolase (437 aa).

A (2R)-2-phosphoglycerate-binding site is contributed by Q162. E204 functions as the Proton donor in the catalytic mechanism. Residues D251, E297, and D324 each contribute to the Mg(2+) site. The (2R)-2-phosphoglycerate site is built by K349, R378, S379, and K400. The Proton acceptor role is filled by K349.

This sequence belongs to the enolase family. Mg(2+) is required as a cofactor.

The protein localises to the cytoplasm. It localises to the secreted. The protein resides in the cell surface. The catalysed reaction is (2R)-2-phosphoglycerate = phosphoenolpyruvate + H2O. The protein operates within carbohydrate degradation; glycolysis; pyruvate from D-glyceraldehyde 3-phosphate: step 4/5. Functionally, catalyzes the reversible conversion of 2-phosphoglycerate (2-PG) into phosphoenolpyruvate (PEP). It is essential for the degradation of carbohydrates via glycolysis. The chain is Enolase from Chlorobaculum parvum (strain DSM 263 / NCIMB 8327) (Chlorobium vibrioforme subsp. thiosulfatophilum).